A 147-amino-acid chain; its full sequence is Sec-independent protein translocase protein TatB (147 aa).

The helical transmembrane segment at 2 to 22 (FSSIGWPEIFTVLILGLIIIG) threads the bilayer. The disordered stretch occupies residues 96–147 (FDPKKIMASGTEGEAYRERGINPQPAGDSASPQTPSNKESQPKAGFSWDDIT). The segment covering 125 to 134 (ASPQTPSNKE) has biased composition (polar residues).

It belongs to the TatB family. The Tat system comprises two distinct complexes: a TatABC complex, containing multiple copies of TatA, TatB and TatC subunits, and a separate TatA complex, containing only TatA subunits. Substrates initially bind to the TatABC complex, which probably triggers association of the separate TatA complex to form the active translocon.

The protein localises to the cell membrane. Part of the twin-arginine translocation (Tat) system that transports large folded proteins containing a characteristic twin-arginine motif in their signal peptide across membranes. Together with TatC, TatB is part of a receptor directly interacting with Tat signal peptides. TatB may form an oligomeric binding site that transiently accommodates folded Tat precursor proteins before their translocation. This is Sec-independent protein translocase protein TatB from Corynebacterium diphtheriae (strain ATCC 700971 / NCTC 13129 / Biotype gravis).